The sequence spans 614 residues: 2-succinyl-5-enolpyruvyl-6-hydroxy-3-cyclohexene-1-carboxylate synthase (614 aa).

This sequence belongs to the TPP enzyme family. MenD subfamily. In terms of assembly, homodimer. The cofactor is Mg(2+). Mn(2+) serves as cofactor. Requires thiamine diphosphate as cofactor.

It carries out the reaction isochorismate + 2-oxoglutarate + H(+) = 5-enolpyruvoyl-6-hydroxy-2-succinyl-cyclohex-3-ene-1-carboxylate + CO2. It functions in the pathway quinol/quinone metabolism; 1,4-dihydroxy-2-naphthoate biosynthesis; 1,4-dihydroxy-2-naphthoate from chorismate: step 2/7. The protein operates within quinol/quinone metabolism; menaquinone biosynthesis. In terms of biological role, catalyzes the thiamine diphosphate-dependent decarboxylation of 2-oxoglutarate and the subsequent addition of the resulting succinic semialdehyde-thiamine pyrophosphate anion to isochorismate to yield 2-succinyl-5-enolpyruvyl-6-hydroxy-3-cyclohexene-1-carboxylate (SEPHCHC). The chain is 2-succinyl-5-enolpyruvyl-6-hydroxy-3-cyclohexene-1-carboxylate synthase from Sorangium cellulosum (strain So ce56) (Polyangium cellulosum (strain So ce56)).